The primary structure comprises 595 residues: Indole-3-acetic acid-amido synthetase GH3.15 (595 aa).

ATP is bound by residues 97-98 (SS), threonine 302, and 325-330 (FYGSSE). Residues phenylalanine 325 and phenylalanine 332 each coordinate substrate. Residues tyrosine 348 and aspartate 408 each coordinate ATP.

Belongs to the IAA-amido conjugating enzyme family. As to expression, expressed in seedlings, roots, and parts of the siliques.

The enzyme catalyses (indol-3-yl)butanoate + L-cysteine + ATP = (indol-3-yl)butanoyl-L-cysteine + AMP + diphosphate + H(+). It carries out the reaction (indol-3-yl)butanoate + L-glutamine + ATP = (indol-3-yl)butanoyl-L-glutamine + AMP + diphosphate + H(+). It catalyses the reaction 4-(2,4-dichlorophenoxy)butanoate + L-glutamine + ATP = 4-(2,4-dichlorophenoxy)butanoyl-L-glutamine + AMP + diphosphate + H(+). In terms of biological role, indole-3-acetic acid-amido (IAA) synthetase that catalyzes the conjugation of amino acids to auxin specifically using the auxin precursor indole-3-butyric acid (IBA) and glutamine and, possibly, cysteine as substrates. Displays high catalytic activity with the auxinic phenoxyalkanoic acid herbicides 4-(2,4-dichlorophenoxy)butyric acid (2,4-DB) and to some extent 2,4-dichlorophenoxylacetic acid (2,4-D) as substrates, thus conferring resistance to herbicides. The polypeptide is Indole-3-acetic acid-amido synthetase GH3.15 (Arabidopsis thaliana (Mouse-ear cress)).